Reading from the N-terminus, the 327-residue chain is Phenylalanine--tRNA ligase alpha subunit (327 aa).

E252 provides a ligand contact to Mg(2+).

It belongs to the class-II aminoacyl-tRNA synthetase family. Phe-tRNA synthetase alpha subunit type 1 subfamily. Tetramer of two alpha and two beta subunits. It depends on Mg(2+) as a cofactor.

It localises to the cytoplasm. The catalysed reaction is tRNA(Phe) + L-phenylalanine + ATP = L-phenylalanyl-tRNA(Phe) + AMP + diphosphate + H(+). The protein is Phenylalanine--tRNA ligase alpha subunit of Yersinia enterocolitica serotype O:8 / biotype 1B (strain NCTC 13174 / 8081).